Here is a 193-residue protein sequence, read N- to C-terminus: Probable GTP-binding protein EngB (193 aa).

The region spanning 22-193 (LLPEVALAGR…AAWEAIYRHL (172 aa)) is the EngB-type G domain. Residues 30–37 (GRSNVGKS), 57–61 (GKTQT), 75–78 (DVPG), 142–145 (TKLD), and 174–176 (FSS) each bind GTP. The Mg(2+) site is built by serine 37 and threonine 59.

Belongs to the TRAFAC class TrmE-Era-EngA-EngB-Septin-like GTPase superfamily. EngB GTPase family. Mg(2+) serves as cofactor.

Functionally, necessary for normal cell division and for the maintenance of normal septation. The chain is Probable GTP-binding protein EngB from Exiguobacterium sibiricum (strain DSM 17290 / CCUG 55495 / CIP 109462 / JCM 13490 / 255-15).